The chain runs to 90 residues: Probable Fe(2+)-trafficking protein (90 aa).

It belongs to the Fe(2+)-trafficking protein family.

In terms of biological role, could be a mediator in iron transactions between iron acquisition and iron-requiring processes, such as synthesis and/or repair of Fe-S clusters in biosynthetic enzymes. The protein is Probable Fe(2+)-trafficking protein of Colwellia psychrerythraea (strain 34H / ATCC BAA-681) (Vibrio psychroerythus).